A 134-amino-acid chain; its full sequence is Small ribosomal subunit protein bS6 (134 aa).

The disordered stretch occupies residues 103–134 (AAPVKSAEEGTEEVAAEAATEAPAETTTTVEV). The span at 118–134 (AEAATEAPAETTTTVEV) shows a compositional bias: low complexity.

It belongs to the bacterial ribosomal protein bS6 family.

In terms of biological role, binds together with bS18 to 16S ribosomal RNA. The sequence is that of Small ribosomal subunit protein bS6 from Geobacter sp. (strain M21).